We begin with the raw amino-acid sequence, 455 residues long: Alcohol acyl transferase 1 allele GSb (455 aa).

Active-site proton acceptor residues include His-164 and Asn-385.

Belongs to the plant acyltransferase family. As to expression, expressed at very low levels in the skin of ripe fruit.

In terms of biological role, involved in the biosynthesis of volatile esters which confer ripe apple fruit flavor. Alcohol acyl transferase that can use a wide range of alcohols as substrate to produce esters. The chain is Alcohol acyl transferase 1 allele GSb from Malus domestica (Apple).